A 308-amino-acid chain; its full sequence is Coenzyme PQQ synthesis protein B (308 aa).

This sequence belongs to the PqqB family.

It functions in the pathway cofactor biosynthesis; pyrroloquinoline quinone biosynthesis. Its function is as follows. May be involved in the transport of PQQ or its precursor to the periplasm. The chain is Coenzyme PQQ synthesis protein B from Rhodopseudomonas palustris (strain TIE-1).